A 286-amino-acid polypeptide reads, in one-letter code: MLKTVQQKLHHHTRPLLAWLKLLWRRIDEDHMTTLAGNLAYVSLLSLVPLIAVVFALFAAFPMFSEVSVQIRHFIFANFIPATGDVIQGYIEQFVANSSRMTAVGAFGLIVTSLLLMYSIDSALNTIWRSTRSRPKVYSFAVYWMILTLGPLLAGASLAISSYLLSLRWASDLDGVIDNLLRLFPLILSWAAFWLLYSIVPTTQVRNRDAVIGALVAALLFEAGKKAFALYITTFPSYQLIYGVISVVPILFVWVYWTWCIVLLGAEITVTLGEYRKLKTEETEQP.

Helical transmembrane passes span 44–64, 74–94, 104–124, 140–160, 183–203, 210–230, and 244–264; these read LLSL…FPMF, FIFA…IEQF, VGAF…DSAL, FAVY…SLAI, LFPL…VPTT, AVIG…AFAL, and VISV…IVLL.

The protein belongs to the UPF0761 family.

It is found in the cell inner membrane. This Klebsiella pneumoniae (strain 342) protein is UPF0761 membrane protein KPK_5501.